The following is a 405-amino-acid chain: S-adenosylmethionine sensor upstream of mTORC1 (405 aa).

A disordered region spans residues M1–E34. The segment covering R25–E34 has biased composition (basic and acidic residues). 6 residues coordinate S-adenosyl-L-methionine: R95, G172, D190, D202, F203, and S244.

The protein belongs to the BMT2/SAMTOR family. As to quaternary structure, interacts with the DEPDC5 subunit of the GATOR1 complex; interaction is disrupted when SAMTOR binds S-adenosyl-L-methionine. Interacts with the KICSTOR complex; interaction is disrupted when SAMTOR binds S-adenosyl-L-methionine.

Its function is as follows. S-adenosyl-L-methionine-binding protein that acts as an inhibitor of mTORC1 signaling via interaction with the GATOR1 and KICSTOR complexes. Acts as a sensor of S-adenosyl-L-methionine to signal methionine sufficiency to mTORC1: in presence of methionine, binds S-adenosyl-L-methionine, leading to disrupt interaction with the GATOR1 and KICSTOR complexes and promote mTORC1 signaling. Upon methionine starvation, S-adenosyl-L-methionine levels are reduced, thereby promoting the association with GATOR1 and KICSTOR, leading to inhibit mTORC1 signaling. Probably also acts as a S-adenosyl-L-methionine-dependent methyltransferase (Potential). This is S-adenosylmethionine sensor upstream of mTORC1 from Homo sapiens (Human).